The following is a 248-amino-acid chain: Probable phosphatase VPA0505 (248 aa).

Zn(2+)-binding residues include H8, H10, H16, H41, E74, H102, H132, D194, and H196.

It belongs to the PHP family. Zn(2+) is required as a cofactor.

The polypeptide is Probable phosphatase VPA0505 (Vibrio parahaemolyticus serotype O3:K6 (strain RIMD 2210633)).